A 114-amino-acid chain; its full sequence is Small ribosomal subunit protein uS17 (114 aa).

Belongs to the universal ribosomal protein uS17 family. Part of the 30S ribosomal subunit.

Its function is as follows. One of the primary rRNA binding proteins, it binds specifically to the 5'-end of 16S ribosomal RNA. This Sulfolobus acidocaldarius (strain ATCC 33909 / DSM 639 / JCM 8929 / NBRC 15157 / NCIMB 11770) protein is Small ribosomal subunit protein uS17.